The chain runs to 116 residues: Large ribosomal subunit protein bL19 (116 aa).

It belongs to the bacterial ribosomal protein bL19 family.

In terms of biological role, this protein is located at the 30S-50S ribosomal subunit interface and may play a role in the structure and function of the aminoacyl-tRNA binding site. The sequence is that of Large ribosomal subunit protein bL19 from Staphylococcus aureus (strain Mu3 / ATCC 700698).